The chain runs to 141 residues: Large ribosomal subunit protein uL22 (141 aa).

Belongs to the universal ribosomal protein uL22 family. In terms of assembly, part of the 50S ribosomal subunit.

Its function is as follows. This protein binds specifically to 23S rRNA; its binding is stimulated by other ribosomal proteins, e.g. L4, L17, and L20. It is important during the early stages of 50S assembly. It makes multiple contacts with different domains of the 23S rRNA in the assembled 50S subunit and ribosome. In terms of biological role, the globular domain of the protein is located near the polypeptide exit tunnel on the outside of the subunit, while an extended beta-hairpin is found that lines the wall of the exit tunnel in the center of the 70S ribosome. In Frankia casuarinae (strain DSM 45818 / CECT 9043 / HFP020203 / CcI3), this protein is Large ribosomal subunit protein uL22.